Consider the following 349-residue polypeptide: MAAITNNPDKEKALGLVLNQIERNFGKGSIMRLGDAARMRVETISSGSLTLDLALGGGLPQGRIIEIYGPESSGKTTLALHAIAEVQKAGGVAAFVDAEHALDPNYSNALGVDIDNLLVAQPDTGESALEIVDQLVRSAAVDIVVIDSVAALVPRAEIEGEMGDTQVGLQARLMSKALRKIAGNIGKSGCVVIFLNQLRQKIGVTYGSPEVTTGGNALKFYASVRLDIRRIQTLKKGSEGEYGIRAKVKVAKNKVAPPFRIAEFDIIFGKGISRMGCMLDLAEQTDVVNRKGAWYSYNGENISQGRDNAVKYLEDNPEVADTIERQVREKLELGSLNFAISQTDDNEEE.

Gly69 to Thr76 contributes to the ATP binding site.

The protein belongs to the RecA family.

Its subcellular location is the cytoplasm. Can catalyze the hydrolysis of ATP in the presence of single-stranded DNA, the ATP-dependent uptake of single-stranded DNA by duplex DNA, and the ATP-dependent hybridization of homologous single-stranded DNAs. It interacts with LexA causing its activation and leading to its autocatalytic cleavage. This Rippkaea orientalis (strain PCC 8801 / RF-1) (Cyanothece sp. (strain PCC 8801)) protein is Protein RecA.